A 299-amino-acid polypeptide reads, in one-letter code: Transcription elongation factor A protein 2 (299 aa).

The region spanning 6–83 (EEIARIARRL…KSWKKLLDAS (78 aa)) is the TFIIS N-terminal domain. A Glycyl lysine isopeptide (Lys-Gly) (interchain with G-Cter in ubiquitin) cross-link involves residue K58. Phosphoserine occurs at positions 60 and 100. Residues 86 to 128 (KARERGRGMPLPTSSRDASEAPDPSRKRPELPRAPSTPRITTF) are disordered. Positions 102–116 (DASEAPDPSRKRPEL) are enriched in basic and acidic residues. The TFIIS central domain occupies 138–254 (VRNKCREMLT…EHQMARTGGT (117 aa)). The TFIIS-type zinc-finger motif lies at 257–297 (DLFTCGKCRKKNCTYTQVQTRSSDEPMTTFVVCNECGNRWK). Positions 261, 264, 289, and 292 each coordinate Zn(2+).

The protein belongs to the TFS-II family. As to quaternary structure, interacts with the basal transcription factor GTF2B. Interacts with REXO1. In terms of tissue distribution, testis and ovary specific.

Its subcellular location is the nucleus. Functionally, necessary for efficient RNA polymerase II transcription elongation past template-encoded arresting sites. The arresting sites in DNA have the property of trapping a certain fraction of elongating RNA polymerases that pass through, resulting in locked ternary complexes. Cleavage of the nascent transcript by S-II allows the resumption of elongation from the new 3'-terminus. This Homo sapiens (Human) protein is Transcription elongation factor A protein 2 (TCEA2).